The primary structure comprises 2322 residues: Chondroitin sulfate proteoglycan 4 (2322 aa).

Residues 1 to 29 form the signal peptide; it reads MQSGPRPPLPAPGLALALTLTMLARLASA. Laminin G-like domains lie at 30–192 and 202–380; these read ASFF…HEGC and VALG…AAGC. Residues 30–639 are globular or compact configuration stabilized by disulfide bonds; it reads ASFFGENHLE…HRGGPAQDLT (610 aa). A neurite growth inhibition region spans residues 30–639; sequence ASFFGENHLE…HRGGPAQDLT (610 aa). Residues 30-2224 are Extracellular-facing; the sequence is ASFFGENHLE…LSFLEANMFS (2195 aa). A glycan (N-linked (GlcNAc...) asparagine) is linked at N130. A disulfide bridge connects residues C169 and C192. N348 carries an N-linked (GlcNAc...) asparagine glycan. An intrachain disulfide couples C354 to C380. The N-linked (GlcNAc...) asparagine glycan is linked to N427. 3 CSPG repeats span residues 428 to 523, 553 to 645, and 662 to 764; these read FTQL…LEVS, PHII…VSDG, and AIQI…LEVQ. An interaction with COL6A2 region spans residues 574-1040; it reads GPEVFQAYDP…RGGRRLLTTD (467 aa). The tract at residues 631–1446 is interaction with COL5A1; it reads RGGPAQDLTF…SETLTDSFVL (816 aa). 2 N-linked (GlcNAc...) asparagine glycosylation sites follow: N685 and N772. CSPG repeat units follow at residues 783-878 and 898-989; these read TVWM…FRVT and DAPV…FVAT. The O-linked (Xyl...) (chondroitin sulfate) serine glycan is linked to S995. CSPG repeat units follow at residues 1018 to 1110, 1126 to 1216, 1238 to 1337, 1356 to 1449, 1473 to 1563, 1581 to 1679, 1704 to 1803, 1832 to 1924, and 1941 to 2029; these read APVQ…VSDG, YLRV…FSVE, PLKL…LDVA, AAIP…LMAN, PPIL…LSDG, LLSL…LQLS, PSHL…FRAH, PPQP…MSDG, and AIEV…VLAL. N-linked (GlcNAc...) asparagine glycosylation is found at N1131 and N1202. N-linked (GlcNAc...) asparagine glycosylation is found at N1364 and N1449. Residues 1586 to 2221 are neurite growth inhibition; that stretch reads GSQTLTVCPG…GGFLSFLEAN (636 aa). Residues 1587–2221 are cysteine-containing; the sequence is SQTLTVCPGS…GGFLSFLEAN (635 aa). N1645 carries an N-linked (GlcNAc...) asparagine glycan. 5 N-linked (GlcNAc...) asparagine glycosylation sites follow: N1909, N2016, N2034, N2040, and N2075. The CSPG 15 repeat unit spans residues 2038 to 2147; sequence VVNVTVRALL…AGDSLTLELW (110 aa). Residues 2182–2206 are disordered; the sequence is ARTEAGKPESSTPTGEPGPMASSPE. The helical transmembrane segment at 2225–2245 threads the bilayer; the sequence is VIIPMCLVLLLLALILPLLFY. At 2246–2322 the chain is on the cytoplasmic side; the sequence is LRKRNKTGKH…PALKNGQYWV (77 aa). A Phosphothreonine; by PKC/PRKCA modification is found at T2252. The PDZ-binding signature appears at 2320-2322; the sequence is YWV.

Interacts with the first PDZ domain of MPDZ. Interacts with PRKCA. Binds TNC, laminin-1, COL5A1 and COL6A2. Interacts with PLG and angiostatin. Binds FGF2 and PDGFA. Interacts with GRIP1, GRIP2 and GRIA2. Forms a ternary complex with GRIP1 and GRIA2. Interacts with LGALS3 and the integrin composed of ITGB1 and ITGA3. Interacts with ITGA4 through its chondroitin sulfate glycosaminoglycan. Interacts with BCAR1, CDC42 and ACK1. Interacts with MMP16. In terms of assembly, (Microbial infection) Interacts with C.difficile toxin TcdB, suggesting that it may act as a receptor for TcdB. O-glycosylated; contains glycosaminoglycan chondroitin sulfate which are required for proper localization and function in stress fiber formation. Involved in interaction with MMP16 and ITGA4. Post-translationally, phosphorylation by PRKCA regulates its subcellular location and function in cell motility. In terms of tissue distribution, detected in fibroblasts (at protein level). Detected in placenta (at protein level). Detected in malignant melanoma cells.

It is found in the cell membrane. The protein localises to the apical cell membrane. It localises to the cell projection. Its subcellular location is the lamellipodium membrane. The protein resides in the cell surface. In terms of biological role, proteoglycan playing a role in cell proliferation and migration which stimulates endothelial cells motility during microvascular morphogenesis. May also inhibit neurite outgrowth and growth cone collapse during axon regeneration. Cell surface receptor for collagen alpha 2(VI) which may confer cells ability to migrate on that substrate. Binds through its extracellular N-terminus growth factors, extracellular matrix proteases modulating their activity. May regulate MPP16-dependent degradation and invasion of type I collagen participating in melanoma cells invasion properties. May modulate the plasminogen system by enhancing plasminogen activation and inhibiting angiostatin. Also functions as a signal transducing protein by binding through its cytoplasmic C-terminus scaffolding and signaling proteins. May promote retraction fiber formation and cell polarization through Rho GTPase activation. May stimulate alpha-4, beta-1 integrin-mediated adhesion and spreading by recruiting and activating a signaling cascade through CDC42, ACK1 and BCAR1. May activate FAK and ERK1/ERK2 signaling cascades. The sequence is that of Chondroitin sulfate proteoglycan 4 (CSPG4) from Homo sapiens (Human).